Here is a 73-residue protein sequence, read N- to C-terminus: Ferredoxin-thioredoxin reductase, variable chain (73 aa).

Residues 43 to 46 (NGKP) form an interaction with ferredoxin region.

Belongs to the ferredoxin thioredoxin reductase alpha subunit family. Heterodimer of subunit A (variable subunit) and subunit B (catalytic subunit). Heterodimeric FTR forms a complex with ferredoxin and thioredoxin.

Functionally, variable subunit of the ferredoxin-thioredoxin reductase (FTR), which catalyzes the two-electron reduction of thioredoxins by the electrons provided by reduced ferredoxin. In Synechococcus sp. (strain ATCC 27144 / PCC 6301 / SAUG 1402/1) (Anacystis nidulans), this protein is Ferredoxin-thioredoxin reductase, variable chain (ftrV).